The following is a 195-amino-acid chain: Auxin-induced protein AUX22 (195 aa).

Residues 13–17 carry the EAR-like (transcriptional repression) motif; it reads LRLGL. The disordered stretch occupies residues 37–60; sequence FSEIDDGVGDENSSSGGGDRKMET. A PB1 domain is found at 86–174; sequence KMYVKVSMDG…KRLRIMKKSD (89 aa).

It belongs to the Aux/IAA family. In terms of assembly, homodimers and heterodimers.

It is found in the nucleus. Functionally, aux/IAA proteins are short-lived transcriptional factors that function as repressors of early auxin response genes at low auxin concentrations. Repression is thought to result from the interaction with auxin response factors (ARFs), proteins that bind to the auxin-responsive promoter element (AuxRE). Formation of heterodimers with ARF proteins may alter their ability to modulate early auxin response genes expression. This Glycine max (Soybean) protein is Auxin-induced protein AUX22 (AUX22).